Reading from the N-terminus, the 104-residue chain is Large ribosomal subunit protein bL21 (104 aa).

This sequence belongs to the bacterial ribosomal protein bL21 family. Part of the 50S ribosomal subunit. Contacts protein L20.

Its function is as follows. This protein binds to 23S rRNA in the presence of protein L20. The chain is Large ribosomal subunit protein bL21 from Thermodesulfovibrio yellowstonii (strain ATCC 51303 / DSM 11347 / YP87).